A 200-amino-acid polypeptide reads, in one-letter code: Phospholipase A2 inhibitor gamma subunit A (200 aa).

The first 19 residues, 1 to 19 (MKSLHTICLLFIFIARGNS), serve as a signal peptide directing secretion. Cystine bridges form between C22-C46, C25-C32, C39-C67, C73-C94, C95-C100, C118-C143, C136-C165, and C169-C191. Residue N176 is glycosylated (N-linked (GlcNAc...) asparagine).

Belongs to the CNF-like-inhibitor family. As to quaternary structure, occurs as a mixture of oligomers. Tetrameric arrangement appears to be the predominant quaternary structure. In terms of tissue distribution, expressed by the liver.

Its subcellular location is the secreted. Its function is as follows. Inhibits the enzymatic activity of phospholipase A2 (PA2). The polypeptide is Phospholipase A2 inhibitor gamma subunit A (Gloydius brevicaudus siniticus (Chinese mamushi)).